The chain runs to 212 residues: RING-H2 finger protein ATL68 (212 aa).

The chain crosses the membrane as a helical span at residues L24–I44. Residues C136–R178 form an RING-type; atypical zinc finger. A disordered region spans residues L182–R212. Low complexity predominate over residues P185–S195.

It belongs to the RING-type zinc finger family. ATL subfamily.

The protein resides in the membrane. It catalyses the reaction S-ubiquitinyl-[E2 ubiquitin-conjugating enzyme]-L-cysteine + [acceptor protein]-L-lysine = [E2 ubiquitin-conjugating enzyme]-L-cysteine + N(6)-ubiquitinyl-[acceptor protein]-L-lysine.. Its pathway is protein modification; protein ubiquitination. This Arabidopsis thaliana (Mouse-ear cress) protein is RING-H2 finger protein ATL68 (ATL68).